We begin with the raw amino-acid sequence, 237 residues long: Ribonuclease PH (237 aa).

Phosphate-binding positions include Arg-86 and 124 to 126; that span reads GTR.

Belongs to the RNase PH family. As to quaternary structure, homohexameric ring arranged as a trimer of dimers.

The catalysed reaction is tRNA(n+1) + phosphate = tRNA(n) + a ribonucleoside 5'-diphosphate. Phosphorolytic 3'-5' exoribonuclease that plays an important role in tRNA 3'-end maturation. Removes nucleotide residues following the 3'-CCA terminus of tRNAs; can also add nucleotides to the ends of RNA molecules by using nucleoside diphosphates as substrates, but this may not be physiologically important. Probably plays a role in initiation of 16S rRNA degradation (leading to ribosome degradation) during starvation. The sequence is that of Ribonuclease PH from Shewanella baltica (strain OS223).